Here is a 104-residue protein sequence, read N- to C-terminus: uncharacterized protein (104 aa).

It to M.jannaschii MJ1511.

This is an uncharacterized protein from Methanocaldococcus jannaschii (strain ATCC 43067 / DSM 2661 / JAL-1 / JCM 10045 / NBRC 100440) (Methanococcus jannaschii).